We begin with the raw amino-acid sequence, 211 residues long: MVRDKWKDKVWYTILAPDMFDNVEVGETPADDPEKVIGRVLETTLGDVLDDITKHHIKVFFRIYDVEGTTAYSKFEGHRLMRDYVRSLVRRGTSRIDGVIDVVTKDGYKVRVAGLAFTTRRAKTSQQRAIRKEMFKVIEENAKECDFDEFIRRCLSISEEESIPEQIKEAGRKIYPIRQAEIRKTEVLEEPNGLPPYEAVGDRATPELASY.

The segment at 192 to 211 (NGLPPYEAVGDRATPELASY) is disordered.

Belongs to the eukaryotic ribosomal protein eS1 family.

In Methanopyrus kandleri (strain AV19 / DSM 6324 / JCM 9639 / NBRC 100938), this protein is Small ribosomal subunit protein eS1.